The primary structure comprises 420 residues: Dachshund homolog dac-1 (420 aa).

The segment at 23–77 (PSSSSSSSNNSSSNTSSSNFLSPYEYQESSTSPRDTTDSSGESSLSSSGSSSSLN) is disordered. Low complexity-rich tracts occupy residues 24–41 (SSSS…SSSN) and 51–77 (SSTS…SSLN). A DACHbox-N region spans residues 85 to 171 (KLIKFRGHNV…LLKTSDFEKL (87 aa)). The segment covering 242-258 (NSFERADDDDQNQRDAD) has biased composition (basic and acidic residues). The interval 242 to 321 (NSFERADDDD…SSSSSGKNDE (80 aa)) is disordered. Polar residues predominate over residues 263 to 273 (LNLSKSGGNSE). Positions 297–317 (GGSNSNSLSMSMEAGSSSSSG) are enriched in low complexity.

The protein belongs to the DACH/dachshund family. In terms of tissue distribution, expressed in AFD, AWC, ASE and ASK neurons. Expressed in the alae.

The protein localises to the nucleus. Functionally, transcription factor. Plays a role in the thermotactic response. The polypeptide is Dachshund homolog dac-1 (Caenorhabditis elegans).